The chain runs to 309 residues: tRNA pseudouridine synthase B (309 aa).

Aspartate 51 acts as the Nucleophile in catalysis.

It belongs to the pseudouridine synthase TruB family. Type 1 subfamily.

It catalyses the reaction uridine(55) in tRNA = pseudouridine(55) in tRNA. In terms of biological role, responsible for synthesis of pseudouridine from uracil-55 in the psi GC loop of transfer RNAs. This is tRNA pseudouridine synthase B from Coxiella burnetii (strain RSA 331 / Henzerling II).